The sequence spans 293 residues: Foldase protein PrsA 2 (293 aa).

The N-terminal stretch at 1–20 (MKKKLILGLVMMMALFSLAA) is a signal peptide. A lipid anchor (N-palmitoyl cysteine) is attached at Cys-21. Residue Cys-21 is the site of S-diacylglycerol cysteine attachment. A PpiC domain is found at 135 to 226 (QPDITVSHIL…YGYHIIQMDK (92 aa)).

It belongs to the PrsA family.

Its subcellular location is the cell membrane. The catalysed reaction is [protein]-peptidylproline (omega=180) = [protein]-peptidylproline (omega=0). Its function is as follows. Plays a major role in protein secretion by helping the post-translocational extracellular folding of several secreted proteins. In Listeria monocytogenes serovar 1/2a (strain ATCC BAA-679 / EGD-e), this protein is Foldase protein PrsA 2 (prsA2).